Consider the following 180-residue polypeptide: SPbeta prophage-derived uncharacterized protein YosC (180 aa).

The protein is SPbeta prophage-derived uncharacterized protein YosC (yosC) of Bacillus subtilis (strain 168).